Here is a 501-residue protein sequence, read N- to C-terminus: Probable cytochrome P450 508A4 (501 aa).

A helical membrane pass occupies residues 1–21 (MIMLIKVFVLLLVVYILHNSY). Cys-445 serves as a coordination point for heme.

The protein belongs to the cytochrome P450 family. It depends on heme as a cofactor.

It is found in the membrane. The sequence is that of Probable cytochrome P450 508A4 (cyp508A4) from Dictyostelium discoideum (Social amoeba).